Here is an 804-residue protein sequence, read N- to C-terminus: SH3-containing GRB2-like protein 3-interacting protein 1 (804 aa).

Disordered stretches follow at residues 1–90 (MMEG…EESH), 124–181 (LSPS…GPPL), and 199–254 (IWGS…QSAT). Over residues 16–34 (RKKEKDTDSTGSPDRDGIK) the composition is skewed to basic and acidic residues. Ser-54, Ser-80, Ser-81, Ser-83, Ser-125, Ser-127, Ser-132, and Ser-145 each carry phosphoserine. Thr-156 and Thr-158 each carry phosphothreonine. Ser-212 carries the phosphoserine modification. Over residues 221 to 236 (TGTPPPLPPKNVPATP) the composition is skewed to pro residues. 2 positions are modified to phosphothreonine: Thr-223 and Thr-235. Ser-241, Ser-263, Ser-276, Ser-292, and Ser-295 each carry phosphoserine. Residues 289–309 (VHFSDTSPEHVTPELTPREKV) are compositionally biased toward basic and acidic residues. Residues 289 to 500 (VHFSDTSPEH…LSAATTPTVE (212 aa)) form a disordered region. Phosphothreonine occurs at positions 300 and 304. Residues 322 to 346 (SPAPGPLGPPGPTGPPGPPGPPRNV) show a composition bias toward pro residues. Ser-348 is subject to Phosphoserine. A compositionally biased stretch (basic and acidic residues) spans 354–369 (EVQKKVAEQTFIKDDY). Phosphoserine is present on Ser-375. Thr-386 carries the phosphothreonine modification. The segment covering 413–432 (TSGASSPARPATPLLPCSST) has biased composition (low complexity). Residues 433–451 (TPPPPPPRPPSRPKLPPGK) show a composition bias toward pro residues. 2 stretches are compositionally biased toward low complexity: residues 458 to 468 (SRPFSPPIHSS) and 475 to 498 (PLAR…TTPT). Ser-462 is subject to Phosphoserine. In terms of domain architecture, MHD spans 535–803 (TLPVAAAFTE…RFAAGKYLAD (269 aa)). Interaction with DPF motifs-containing proteins regions lie at residues 537–543 (PVAAAFT), 569–571 (SFP), 643–646 (TYYN), and 789–794 (SLIKKR). A necessary and sufficient to mediate interaction with CANX region spans residues 625–804 (MPNLMTHLKK…FAAGKYLADN (180 aa)).

As to quaternary structure, interacts with proteins essential or regulating the formation of functional clathrin-coated pits. Interacts with CANX. Interacts with AP2A1. Interacts with EPS15. Interacts with SH3GL3. Interacts with AMPH. Interacts with ITSN1 (via SH3 domains). Interacts with and REPS1.

The protein localises to the membrane. It is found in the clathrin-coated pit. In terms of biological role, may function in clathrin-mediated endocytosis. Has both a membrane binding/tubulating activity and the ability to recruit proteins essential to the formation of functional clathrin-coated pits. Has a preference for membranes enriched in phosphatidylserine and phosphoinositides and is required for the endocytosis of the transferrin receptor. May also bind tubulin. May play a role in the regulation of energy homeostasis. This is SH3-containing GRB2-like protein 3-interacting protein 1 (SGIP1) from Pongo abelii (Sumatran orangutan).